Consider the following 432-residue polypeptide: MKIEVTPTENINAEITLPGDKSISHRALIIGSLAEGETKIHNFLSSEDTLSTLNILNSIGASIKQISEDEVIVEGKGKDNFIEPSNVLNAKNSGTTMRLMMGVLSAQNFYSVITGDDSLRERPMKRVIDPLSKMGGRFFARKNGEFAPITILGTKDISPLVYKTPVASAQVKSAILLAALYAKGETQVIEPAKSRDHTERMLKYFGADIAQKDTTVVIRGLTKNLEGREFFVPGDLSSASFFIVAALITKNSTLLIKNVGINPTRTGILSVLKMMGADIKIINEKTLNNEPVGDLLVKSSSLKGVEIKGEMIPLIIDEIPILAIAATQAKGKTTIKDAKELRYKETDRIRAITRELKKLGIDILEKEDGFDIIGNQKIRGNCTCESYNDHRIAMSLAIAGLIADNPIEIDNFECVNISFPEFTEIFEKIRSI.

3 residues coordinate 3-phosphoshikimate: K21, S22, and R26. K21 is a binding site for phosphoenolpyruvate. G94 and R122 together coordinate phosphoenolpyruvate. 3-phosphoshikimate is bound by residues S168, Q170, D317, and K344. Phosphoenolpyruvate is bound at residue Q170. D317 functions as the Proton acceptor in the catalytic mechanism. Residues R348 and R391 each coordinate phosphoenolpyruvate.

This sequence belongs to the EPSP synthase family. As to quaternary structure, monomer.

The protein localises to the cytoplasm. It carries out the reaction 3-phosphoshikimate + phosphoenolpyruvate = 5-O-(1-carboxyvinyl)-3-phosphoshikimate + phosphate. It participates in metabolic intermediate biosynthesis; chorismate biosynthesis; chorismate from D-erythrose 4-phosphate and phosphoenolpyruvate: step 6/7. Functionally, catalyzes the transfer of the enolpyruvyl moiety of phosphoenolpyruvate (PEP) to the 5-hydroxyl of shikimate-3-phosphate (S3P) to produce enolpyruvyl shikimate-3-phosphate and inorganic phosphate. This Petrotoga mobilis (strain DSM 10674 / SJ95) protein is 3-phosphoshikimate 1-carboxyvinyltransferase.